A 609-amino-acid chain; its full sequence is Myoneurin (609 aa).

In terms of domain architecture, BTB spans 24-89; it reads CDCTILIGDF…IYSGNLNYDS (66 aa). Short sequence motifs (nuclear localization signal) lie at residues 172 to 188 and 257 to 262; these read KKSQ…RSHQ and QKPAKL. 8 C2H2-type zinc fingers span residues 301-323, 329-351, 357-380, 386-408, 414-436, 442-464, 470-492, and 498-521; these read PVCN…MRIH, YVCH…VRTH, YQCK…RMHH, YKCD…ARKH, YVCD…VRRH, YVCD…ARKH, YICG…FRSH, and FVCE…LKMH. The tract at residues 528-553 is disordered; sequence IEMKSAENSSSSEDSTTKSPEPESLE. Residues 533 to 546 show a composition bias toward low complexity; the sequence is AENSSSSEDSTTKS.

Its subcellular location is the nucleus. This Xenopus laevis (African clawed frog) protein is Myoneurin (mynn).